The sequence spans 243 residues: tRNA (guanine-N(1)-)-methyltransferase (243 aa).

S-adenosyl-L-methionine is bound by residues glycine 108 and 127-132; that span reads LGDYVL.

Belongs to the RNA methyltransferase TrmD family. Homodimer.

The protein resides in the cytoplasm. The catalysed reaction is guanosine(37) in tRNA + S-adenosyl-L-methionine = N(1)-methylguanosine(37) in tRNA + S-adenosyl-L-homocysteine + H(+). In terms of biological role, specifically methylates guanosine-37 in various tRNAs. This is tRNA (guanine-N(1)-)-methyltransferase from Streptococcus gordonii (strain Challis / ATCC 35105 / BCRC 15272 / CH1 / DL1 / V288).